The primary structure comprises 776 residues: MVIMSEFSAVPTGTGQGQQKPLRVGFYDVERTLGKGNFAVVKLARHRVTKTQVAIKIIDKTRLDSSNLEKIYREVQLMKLLNHPNIIKLYQVMETKDMLYIVTEFAKNGEMFDYLTSNGHLSENEARKKFWQILSAVEYCHNHHIVHRDLKTENLLLDGNMDIKLADFGFGNFYKPGEPLSTWCGSPPYAAPEVFEGKEYEGPQLDIWSLGVVLYVLVCGSLPFDGPNLPTLRQRVLEGRFRIPFFMSQDCETLIRRMLVVDPAKRITIAQIRQHRWMQADPTLLQQDDPAFSMQGYTSNLGDYNEQVLGIMQALGIDRQRTVESLQNSSYNHFAAIYYLLLERLREHRSTQPSSRATPAPARQPQLRNSDLSSLEVPQEILPCDPFRPSLLCPQPQALAQSVLQAEIDCDLHSSLQPLFFPLDTNCSGVFRHRSISPSSLLDTAISEEARQGPSLEEEQEVQEPLPGSTGRRHTLAEVSTHFSPLNPPCIIVSSSAAVSPSEGTSSDSCLPFSASEGPAGLGGGLATPGLLGTSSPVRLASPFLGSQSATPVLQSQAGLGATVLPPVSFQEGRRASDTSLTQGLKAFRQQLRKNARTKGFLGLNKIKGLARQVCQSSIRGSRGGMSTFHTPAPSSGLQGCTASSREGRSLLEEVLHQQRLLQLQHHSAVSSDYQQAPQLSPVPYVLTPCDGLLVSGIPLLPTPLLQPGMSPVASAAQLLDAHLHISAGPVALPTGPLPQCLTRLSPSCDPAGLPQGDCEMEDLTSGQRGTFVLVQ.

The Protein kinase domain occupies 27 to 278 (YDVERTLGKG…IAQIRQHRWM (252 aa)). Residues 33–41 (LGKGNFAVV) and Lys-56 each bind ATP. The Proton acceptor role is filled by Asp-149. Thr-182 bears the Phosphothreonine; by LKB1 and GSK3-beta mark. A Phosphoserine; by autocatalysis modification is found at Ser-186. In terms of domain architecture, UBA spans 303 to 343 (DYNEQVLGIMQALGIDRQRTVESLQNSSYNHFAAIYYLLLE). Thr-322 is subject to Phosphothreonine; by CaMK1. 2 disordered regions span residues 350-371 (STQPSSRATPAPARQPQLRNSD) and 449-472 (EARQGPSLEEEQEVQEPLPGSTGR). Ser-577 carries the phosphoserine; by PKA modification. Positions 586–612 (KAFRQQLRKNARTKGFLGLNKIKGLAR) are RK-rich region. The tract at residues 621–643 (GSRGGMSTFHTPAPSSGLQGCTA) is disordered. A compositionally biased stretch (polar residues) spans 628–643 (TFHTPAPSSGLQGCTA).

Belongs to the protein kinase superfamily. CAMK Ser/Thr protein kinase family. AMPK subfamily. In terms of assembly, interacts (when phosphorylated on Thr-182 and Ser-186) with YWHAZ. Interacts with ATP1A1. Requires Mg(2+) as cofactor. Phosphorylated at Thr-182 by STK11/LKB1 in complex with STE20-related adapter-alpha (STRADA) pseudo kinase and CAB39, leading to its activation. Phosphorylation at Thr-182 promotes autophosphorylation at Ser-186, which is required for sustained activity. Autophosphorylation at Ser-186 is maintained by sequential phosphorylation at Thr-182 by GSK3-beta. GSK3-beta cannot initiate phosphorylation at Thr-182, it can only maintain it. Phosphorylation at Ser-577 by PKA promotes translocation to the cytoplasm. Phosphorylation at Thr-322 by CaMK1 following intracellular sodium concentration leads to activation.

It is found in the cytoplasm. The protein resides in the nucleus. It catalyses the reaction L-seryl-[protein] + ATP = O-phospho-L-seryl-[protein] + ADP + H(+). The enzyme catalyses L-threonyl-[protein] + ATP = O-phospho-L-threonyl-[protein] + ADP + H(+). Its activity is regulated as follows. Activated by phosphorylation on Thr-182. Also activated by phosphorylation on Thr-322 in response to increases in intracellular sodium in parallel with elevations in intracellular calcium through the reversible sodium/calcium exchanger. In terms of biological role, serine/threonine-protein kinase involved in various processes such as cell cycle regulation, gluconeogenesis and lipogenesis regulation, muscle growth and differentiation and tumor suppression. Phosphorylates HDAC4, HDAC5, PPME1, SREBF1, CRTC1/TORC1 and CRTC2/TORC2. Acts as a tumor suppressor and plays a key role in p53/TP53-dependent anoikis, a type of apoptosis triggered by cell detachment: required for phosphorylation of p53/TP53 in response to loss of adhesion and is able to suppress metastasis. Part of a sodium-sensing signaling network, probably by mediating phosphorylation of PPME1: following increases in intracellular sodium, SIK1 is activated by CaMK1 and phosphorylates PPME1 subunit of protein phosphatase 2A (PP2A), leading to dephosphorylation of sodium/potassium-transporting ATPase ATP1A1 and subsequent increase activity of ATP1A1. Acts as a regulator of muscle cells by phosphorylating and inhibiting class II histone deacetylases HDAC4 and HDAC5, leading to promote expression of MEF2 target genes in myocytes. Also required during cardiomyogenesis by regulating the exit of cardiomyoblasts from the cell cycle via down-regulation of CDKN1C/p57Kip2. Acts as a regulator of hepatic gluconeogenesis by phosphorylating and repressing the CREB-specific coactivators CRTC1/TORC1 and CRTC2/TORC2, leading to inhibit CREB activity. Also regulates hepatic lipogenesis by phosphorylating and inhibiting SREBF1. In concert with CRTC1/TORC1, regulates the light-induced entrainment of the circadian clock by attenuating PER1 induction; represses CREB-mediated transcription of PER1 by phosphorylating and deactivating CRTC1/TORC1. This is Serine/threonine-protein kinase SIK1 (Sik1) from Rattus norvegicus (Rat).